Consider the following 243-residue polypeptide: MTGKVYLVGAGPGDPEYLTLQAQQCLQSAEVLIYDALIDPRILDLVPANCDRIAVGKRGGAESTPQATINQLLVEHCQQGRKVIRLKSGDPFVFGRAASELDALERSGCDYAVLPGLSTALAAPLLAGIPITDPVLSRGFAVYTVHEPDALNWEALAQLETLILLMGSRHLLTIGHELIRHGRSPDSPVALIQWAGHPQQTVLESSLSRMAQQWGDQPLSPCVIVIGEVVRLRKYWAHYRYDG.

S-adenosyl-L-homocysteine-binding positions include Pro-12, 88 to 90 (SGD), 118 to 119 (ST), Met-166, and Ala-195.

It belongs to the precorrin methyltransferase family.

The enzyme catalyses uroporphyrinogen III + 2 S-adenosyl-L-methionine = precorrin-2 + 2 S-adenosyl-L-homocysteine + H(+). It functions in the pathway cofactor biosynthesis; adenosylcobalamin biosynthesis; precorrin-2 from uroporphyrinogen III: step 1/1. The protein operates within porphyrin-containing compound metabolism; siroheme biosynthesis; precorrin-2 from uroporphyrinogen III: step 1/1. Functionally, catalyzes the two successive C-2 and C-7 methylation reactions involved in the conversion of uroporphyrinogen III to precorrin-2 via the intermediate formation of precorrin-1. It is a step in the biosynthesis of both cobalamin (vitamin B12) and siroheme. This is Uroporphyrinogen-III C-methyltransferase from Synechococcus elongatus (strain ATCC 33912 / PCC 7942 / FACHB-805) (Anacystis nidulans R2).